Here is a 164-residue protein sequence, read N- to C-terminus: Crossover junction endodeoxyribonuclease RuvC (164 aa).

Catalysis depends on residues aspartate 7, glutamate 67, and aspartate 139. Residues aspartate 7, glutamate 67, and aspartate 139 each coordinate Mg(2+).

It belongs to the RuvC family. Homodimer which binds Holliday junction (HJ) DNA. The HJ becomes 2-fold symmetrical on binding to RuvC with unstacked arms; it has a different conformation from HJ DNA in complex with RuvA. In the full resolvosome a probable DNA-RuvA(4)-RuvB(12)-RuvC(2) complex forms which resolves the HJ. Requires Mg(2+) as cofactor.

It localises to the cytoplasm. The enzyme catalyses Endonucleolytic cleavage at a junction such as a reciprocal single-stranded crossover between two homologous DNA duplexes (Holliday junction).. The RuvA-RuvB-RuvC complex processes Holliday junction (HJ) DNA during genetic recombination and DNA repair. Endonuclease that resolves HJ intermediates. Cleaves cruciform DNA by making single-stranded nicks across the HJ at symmetrical positions within the homologous arms, yielding a 5'-phosphate and a 3'-hydroxyl group; requires a central core of homology in the junction. The consensus cleavage sequence is 5'-(A/T)TT(C/G)-3'. Cleavage occurs on the 3'-side of the TT dinucleotide at the point of strand exchange. HJ branch migration catalyzed by RuvA-RuvB allows RuvC to scan DNA until it finds its consensus sequence, where it cleaves and resolves the cruciform DNA. This Geobacter metallireducens (strain ATCC 53774 / DSM 7210 / GS-15) protein is Crossover junction endodeoxyribonuclease RuvC.